An 80-amino-acid polypeptide reads, in one-letter code: uncharacterized protein (80 aa).

Positions 1 to 23 (MKWNNMLKAAGIAVLLFSVFAYA) are cleaved as a signal peptide.

This is an uncharacterized protein from Bacillus subtilis (strain 168).